The primary structure comprises 499 residues: Alpha-amylase 3 (499 aa).

2 residues coordinate Ca(2+): N127 and D183. The active-site Nucleophile is the D213. H217 lines the Ca(2+) pocket. The active-site Proton donor is the E248.

This sequence belongs to the glycosyl hydrolase 13 family. Monomer. It depends on Ca(2+) as a cofactor.

It localises to the cytoplasm. It catalyses the reaction Endohydrolysis of (1-&gt;4)-alpha-D-glucosidic linkages in polysaccharides containing three or more (1-&gt;4)-alpha-linked D-glucose units.. This Dictyoglomus thermophilum (strain ATCC 35947 / DSM 3960 / H-6-12) protein is Alpha-amylase 3 (amyC).